Reading from the N-terminus, the 567-residue chain is MRFSKAYIKTLKETPKEAEIASHKLMLRAGMIKKLASGIYAYLPLGYRTIKKIENIVREEMDRAGALELLMPVVQPAELWQESGRWDVMGPEMLRLKDRHERDFVLSPTQEEMITAIIRSDISSYKSLPINLYHIQTKFRDERRPRFGLMRGREFTMKDAYSFHTSQESLDEEFLNMRDTYTRIFTRCGLKFRPVDADSGNIGGSGSQEFQVLAESGEDEIIYSDGSEYAANIEKAVSELINPPKEELKEVELVHTPDCPTIESLAKYLDVPLERTVKALTYKDMGTDEIYMVLIRGDFEVNEVKLKNILNAVEVEMATDEEIEKIGLKKGYIGPYKLPAKIKIVADLSVPEVSNHIVGSHQKDYHYKNVNYDRDYTADIVTDIRKVRVGDNCITGGKLHSARGIECGQIFKLGDKYSKAMNATYLDEKGKTQFMLMGCYGIGVTRTMAASIEQNNDENGIIWPVSIAPYIVDVIPANIKNEVQVSLAEKIYNELQEEKIDVMLDDRDEKPGFKFKDADLIGFPFKVVVGKRADEGIVELKIRRTGETLEVSQNEVIAKIKELMRIY.

The protein belongs to the class-II aminoacyl-tRNA synthetase family. ProS type 1 subfamily. In terms of assembly, homodimer.

Its subcellular location is the cytoplasm. It catalyses the reaction tRNA(Pro) + L-proline + ATP = L-prolyl-tRNA(Pro) + AMP + diphosphate. Catalyzes the attachment of proline to tRNA(Pro) in a two-step reaction: proline is first activated by ATP to form Pro-AMP and then transferred to the acceptor end of tRNA(Pro). As ProRS can inadvertently accommodate and process non-cognate amino acids such as alanine and cysteine, to avoid such errors it has two additional distinct editing activities against alanine. One activity is designated as 'pretransfer' editing and involves the tRNA(Pro)-independent hydrolysis of activated Ala-AMP. The other activity is designated 'posttransfer' editing and involves deacylation of mischarged Ala-tRNA(Pro). The misacylated Cys-tRNA(Pro) is not edited by ProRS. This chain is Proline--tRNA ligase, found in Fusobacterium nucleatum subsp. nucleatum (strain ATCC 25586 / DSM 15643 / BCRC 10681 / CIP 101130 / JCM 8532 / KCTC 2640 / LMG 13131 / VPI 4355).